Here is a 130-residue protein sequence, read N- to C-terminus: Small ribosomal subunit protein uS9 (130 aa).

The protein belongs to the universal ribosomal protein uS9 family.

This Shewanella piezotolerans (strain WP3 / JCM 13877) protein is Small ribosomal subunit protein uS9.